We begin with the raw amino-acid sequence, 335 residues long: Fructose-1,6-bisphosphatase class 1 (335 aa).

Mg(2+) contacts are provided by Glu92, Asp114, Leu116, and Asp117. Substrate contacts are provided by residues 117–120 (DGSS), Asn209, and Lys275. Glu281 contributes to the Mg(2+) binding site.

The protein belongs to the FBPase class 1 family. Homotetramer. Requires Mg(2+) as cofactor.

The protein localises to the cytoplasm. It carries out the reaction beta-D-fructose 1,6-bisphosphate + H2O = beta-D-fructose 6-phosphate + phosphate. It functions in the pathway carbohydrate biosynthesis; gluconeogenesis. This Delftia acidovorans (strain DSM 14801 / SPH-1) protein is Fructose-1,6-bisphosphatase class 1.